A 182-amino-acid polypeptide reads, in one-letter code: MEQFHGTTIISVRRKTPEGYSVAIGGDGQVTLGNIVVKGTARKVRKLYHGKVLAGFAGATADAFTLFERFEAKLEKHQGHLVRAAIELTKDWRTDRVLRRLEAMLAVADSEASLIITGNGDVLEPENGIVTIGSGGAYAQAAAMALLNHTEMSAPEIVKKSLEIAAEICIYTNMSHTIETLP.

Thr7 is an active-site residue. Positions 166, 169, and 172 each coordinate Na(+).

The protein belongs to the peptidase T1B family. HslV subfamily. A double ring-shaped homohexamer of HslV is capped on each side by a ring-shaped HslU homohexamer. The assembly of the HslU/HslV complex is dependent on binding of ATP.

The protein resides in the cytoplasm. The catalysed reaction is ATP-dependent cleavage of peptide bonds with broad specificity.. With respect to regulation, allosterically activated by HslU binding. In terms of biological role, protease subunit of a proteasome-like degradation complex believed to be a general protein degrading machinery. In Albidiferax ferrireducens (strain ATCC BAA-621 / DSM 15236 / T118) (Rhodoferax ferrireducens), this protein is ATP-dependent protease subunit HslV.